A 405-amino-acid chain; its full sequence is Glucose-1-phosphate adenylyltransferase 1 (405 aa).

Alpha-D-glucose 1-phosphate-binding positions include tyrosine 96, glycine 161, 176–177 (EK), and serine 194.

This sequence belongs to the bacterial/plant glucose-1-phosphate adenylyltransferase family. Homotetramer.

The catalysed reaction is alpha-D-glucose 1-phosphate + ATP + H(+) = ADP-alpha-D-glucose + diphosphate. Its pathway is glycan biosynthesis; glycogen biosynthesis. In terms of biological role, involved in the biosynthesis of ADP-glucose, a building block required for the elongation reactions to produce glycogen. Catalyzes the reaction between ATP and alpha-D-glucose 1-phosphate (G1P) to produce pyrophosphate and ADP-Glc. In Vibrio vulnificus (strain CMCP6), this protein is Glucose-1-phosphate adenylyltransferase 1.